A 70-amino-acid polypeptide reads, in one-letter code: UPF0270 protein VV1_1320 (70 aa).

Belongs to the UPF0270 family.

The polypeptide is UPF0270 protein VV1_1320 (Vibrio vulnificus (strain CMCP6)).